The primary structure comprises 368 residues: CST complex subunit STN1 (368 aa).

The tract at residues 2-192 (AVSLGDDDAD…KCYDQPFKMP (191 aa)) is interaction with CTC1. A DNA-binding region (OB) is located at residues 58–162 (VDVLGIVVYK…EIKATSFYKV (105 aa)). Winged helix-turn-helix (wHTH) stretches follow at residues 201-295 (AGGS…NVTE) and 296-368 (QDKD…YIVL).

It belongs to the CTC1 family. In terms of assembly, component of the CST complex.

The protein localises to the nucleus. Its subcellular location is the chromosome. It localises to the telomere. Its function is as follows. Component of the CST complex proposed to act as a specialized replication factor promoting DNA replication under conditions of replication stress or natural replication barriers such as the telomere duplex. The CST complex binds single-stranded DNA with high affinity in a sequence-independent manner, while isolated subunits bind DNA with low affinity by themselves. Initially the CST complex has been proposed to protect telomeres from DNA degradation. However, the CST complex has been shown to be involved in several aspects of telomere replication. The chain is CST complex subunit STN1 from Danio rerio (Zebrafish).